The chain runs to 143 residues: Large ribosomal subunit protein uL15 (143 aa).

The tract at residues 1-57 is disordered; it reads MQLNNLKPAAGSKHAKRRVGRGIGSGLGKTAGRGHKGQKSRSGGFHKVGFEGGQMPL. The span at 21-31 shows a compositional bias: gly residues; the sequence is RGIGSGLGKTA.

The protein belongs to the universal ribosomal protein uL15 family. Part of the 50S ribosomal subunit.

Binds to the 23S rRNA. The chain is Large ribosomal subunit protein uL15 from Ralstonia nicotianae (strain ATCC BAA-1114 / GMI1000) (Ralstonia solanacearum).